The following is a 1102-amino-acid chain: DNA-directed RNA polymerase subunit beta (1102 aa).

Positions 1076-1102 are disordered; the sequence is IDSQRRAPNRPTYESLHTEEDLEEEEV.

This sequence belongs to the RNA polymerase beta chain family. In cyanobacteria the RNAP catalytic core is composed of 2 alpha, 1 beta, 1 beta', 1 gamma and 1 omega subunit. When a sigma factor is associated with the core the holoenzyme is formed, which can initiate transcription.

The catalysed reaction is RNA(n) + a ribonucleoside 5'-triphosphate = RNA(n+1) + diphosphate. Functionally, DNA-dependent RNA polymerase catalyzes the transcription of DNA into RNA using the four ribonucleoside triphosphates as substrates. This chain is DNA-directed RNA polymerase subunit beta, found in Synechocystis sp. (strain ATCC 27184 / PCC 6803 / Kazusa).